A 406-amino-acid polypeptide reads, in one-letter code: Lysophospholipid transporter LplT (406 aa).

11 consecutive transmembrane segments (helical) span residues 16–36 (MVAV…LLFA), 53–73 (ILQM…GQIA), 91–111 (AGAL…LVGV), 139–159 (MMEA…GILA), 164–184 (MAAL…NLFI), 227–247 (LFWG…PVAL), 253–273 (ATPT…AGAA), 285–305 (CLPA…QNSM), 310–330 (LLLI…NALL), 349–369 (LGEN…VKLG), and 372–392 (VVAV…LLWG).

This sequence belongs to the major facilitator superfamily. LplT (TC 2.A.1.42) family.

The protein resides in the cell inner membrane. Catalyzes the facilitated diffusion of 2-acyl-glycero-3-phosphoethanolamine (2-acyl-GPE) into the cell. The protein is Lysophospholipid transporter LplT of Yersinia pestis bv. Antiqua (strain Antiqua).